The primary structure comprises 239 residues: Ubiquinone biosynthesis O-methyltransferase (239 aa).

S-adenosyl-L-methionine contacts are provided by R44, G63, D84, and M128.

Belongs to the methyltransferase superfamily. UbiG/COQ3 family.

The catalysed reaction is a 3-demethylubiquinol + S-adenosyl-L-methionine = a ubiquinol + S-adenosyl-L-homocysteine + H(+). It carries out the reaction a 3-(all-trans-polyprenyl)benzene-1,2-diol + S-adenosyl-L-methionine = a 2-methoxy-6-(all-trans-polyprenyl)phenol + S-adenosyl-L-homocysteine + H(+). Its pathway is cofactor biosynthesis; ubiquinone biosynthesis. Functionally, O-methyltransferase that catalyzes the 2 O-methylation steps in the ubiquinone biosynthetic pathway. This is Ubiquinone biosynthesis O-methyltransferase from Xanthomonas campestris pv. campestris (strain 8004).